Reading from the N-terminus, the 540-residue chain is MTAQIPYQHSSGYISHFHNNELDAGRGRDYNVTIKYLDDKEENIEGQAAKISHNASLHIPVLLCLVISLGGFIFGWDIGTIGGMTNMVSFQEKFGTTNIIHDDETIFVSTKKLTDLQIGLIISIFNISCGVGALTLSKIGDWIGRKGGIWFALVVYCIGITIQILSYGRWYFLTLGRAVTGIGVGVTTVLVPMFLSENSPLKIRGSMVSTYQLIVTFGILMGNILNFICERCYKDPTQNIAWQLPLFLGYIWAIIIGMSLVYVPESPQYLAKIKNDVPSAKYSFARMNGIPATDSMVIEFIDDLLENNYNNEETNNESKKQSLVKRNTFEFIMGKPKLWLRLIIGMMIMAFQQLSGINYFFYYGTSVFKGVGIKDPYITSIILSSVNFLSTILGIYYVEKWGHKTCLLYGSTNLLFYMMTYATVGTFGRETDFSNIVLIIVTCCFIFWFAITLGPVTFVLVSELFPLRTRAISMAICTFINWMFNFLISLLTPMIVSKIDFKLGYIFAACLLALIIFSWILVPETRKKNEQEINKIFEPE.

The Cytoplasmic segment spans residues 1–56 (MTAQIPYQHSSGYISHFHNNELDAGRGRDYNVTIKYLDDKEENIEGQAAKISHNAS). The helical transmembrane segment at 57–76 (LHIPVLLCLVISLGGFIFGW) threads the bilayer. Residues 77 to 119 (DIGTIGGMTNMVSFQEKFGTTNIIHDDETIFVSTKKLTDLQIG) are Extracellular-facing. A helical transmembrane segment spans residues 120–140 (LIISIFNISCGVGALTLSKIG). Topologically, residues 141 to 146 (DWIGRK) are cytoplasmic. The helical transmembrane segment at 147 to 167 (GGIWFALVVYCIGITIQILSY) threads the bilayer. Residues 168-177 (GRWYFLTLGR) are Extracellular-facing. Residues 178–198 (AVTGIGVGVTTVLVPMFLSEN) traverse the membrane as a helical segment. Residues 199–204 (SPLKIR) lie on the Cytoplasmic side of the membrane. A helical transmembrane segment spans residues 205-225 (GSMVSTYQLIVTFGILMGNIL). Residues 226 to 243 (NFICERCYKDPTQNIAWQ) lie on the Extracellular side of the membrane. Residues 244 to 264 (LPLFLGYIWAIIIGMSLVYVP) form a helical membrane-spanning segment. Residues 265-357 (ESPQYLAKIK…IMAFQQLSGI (93 aa)) are Cytoplasmic-facing. A helical transmembrane segment spans residues 358–374 (NYFFYYGTSVFKGVGIK). Topologically, residues 375 to 380 (DPYITS) are extracellular. A helical membrane pass occupies residues 381-398 (IILSSVNFLSTILGIYYV). The Cytoplasmic portion of the chain corresponds to 399–405 (EKWGHKT). Residues 406-426 (CLLYGSTNLLFYMMTYATVGT) form a helical membrane-spanning segment. At 427–440 (FGRETDFSNIVLII) the chain is on the extracellular side. Residues 441–461 (VTCCFIFWFAITLGPVTFVLV) form a helical membrane-spanning segment. Over 462-478 (SELFPLRTRAISMAICT) the chain is Cytoplasmic. The helical transmembrane segment at 479-499 (FINWMFNFLISLLTPMIVSKI) threads the bilayer. Aspartate 500 is a topological domain (extracellular). Residues 501–521 (FKLGYIFAACLLALIIFSWIL) traverse the membrane as a helical segment. At 522–540 (VPETRKKNEQEINKIFEPE) the chain is on the cytoplasmic side.

The protein belongs to the major facilitator superfamily. Sugar transporter (TC 2.A.1.1) family.

The protein resides in the membrane. Probable glucose transporter. The chain is Hexose transporter HXT14 (HXT14) from Saccharomyces cerevisiae (strain ATCC 204508 / S288c) (Baker's yeast).